The primary structure comprises 170 residues: Adenine phosphoribosyltransferase (170 aa).

It belongs to the purine/pyrimidine phosphoribosyltransferase family. As to quaternary structure, homodimer.

It localises to the cytoplasm. It carries out the reaction AMP + diphosphate = 5-phospho-alpha-D-ribose 1-diphosphate + adenine. It functions in the pathway purine metabolism; AMP biosynthesis via salvage pathway; AMP from adenine: step 1/1. Functionally, catalyzes a salvage reaction resulting in the formation of AMP, that is energically less costly than de novo synthesis. The protein is Adenine phosphoribosyltransferase of Bacillus licheniformis (strain ATCC 14580 / DSM 13 / JCM 2505 / CCUG 7422 / NBRC 12200 / NCIMB 9375 / NCTC 10341 / NRRL NRS-1264 / Gibson 46).